The following is a 414-amino-acid chain: MQAEIISVGTEIILGQITNTNARYLADQLRQLAIEAPWQTNVDDDPARIKQALATAKERANLIFICGGLGPTEDDRTMAAVGDYLGRQLRLDEDYWQQIKAQLEARSISATVSPENIRQAYYLAGGTPLSNPTGLALGVYLKDGAHTYVVLPGPPHEFKPMVDQSLLPHLKADFGKGYQTYSALLHFVGRPESLLMQELASLGLDERLVVTSYVQPDEIQVRVTLHDVAKEEATSLLEQAIAKIARQEADYYIGRGAGVSMASQLVALLKEKGLKITGAESLTGGLFQATLCSVAGASEVFDGGFVTYAASAKEQLLGVPVETVRQYGVVSKQTAEAMASGCQQKMGVDVGLSFTGVAGPDDLEGHPAGTVWLGLAIKGRPVESHLLRLPGQTRQFVRQQSVQEGMRLAYNALR.

Belongs to the CinA family.

This chain is Putative competence-damage inducible protein, found in Limosilactobacillus fermentum (strain NBRC 3956 / LMG 18251) (Lactobacillus fermentum).